The sequence spans 4644 residues: Cytoplasmic dynein 1 heavy chain 1 (4644 aa).

N-acetylserine is present on serine 2. Residues 2-1865 form a stem region; the sequence is SEPGGGEDGS…SIQMANAKFN (1864 aa). 4 coiled-coil regions span residues 48 to 69, 179 to 200, 453 to 476, and 541 to 564; these read AALE…FLSD, SVEK…NIEI, AHRK…QLRA, and TEAW…RITA. The residue at position 68 (serine 68) is a Phosphoserine. Positions 446-701 are interaction with DYNC1I2; that stretch reads MVWRINPAHR…NTQEIFDDWA (256 aa). The interaction with DYNC1LI2 stretch occupies residues 649 to 800; sequence AKQIDRQLTA…EKVEERNTIS (152 aa). N6-acetyllysine is present on lysine 1123. Residues 1169 to 1201 adopt a coiled-coil conformation; the sequence is TYVQSLKRKIKQFEKQVELYRNGQRLLEKQRFQ. Serine 1228 is modified (phosphoserine). 2 coiled-coil regions span residues 1229-1250 and 1355-1371; these read AIQQ…AVES and RKLR…LKNF. 4 AAA regions span residues 1866 to 2097, 2178 to 2450, 2554 to 2803, and 2897 to 3166; these read YGFE…VLVS, EELK…LTRL, EVET…WVRG, and VFYE…GGRT. ATP is bound by residues 1904-1911 and 2222-2229; these read GPAGTGKT and GPSGSGKS. The interval 2388 to 2408 is disordered; that stretch reads GEDEAQRRRKGKEDEGEEAAS. Residues 2593 to 2600 and 2935 to 2942 contribute to the ATP site; these read GPPGSGKT and GVSGAGKT. Coiled-coil stretches lie at residues 3187 to 3273, 3394 to 3498, and 3735 to 3798; these read EKRS…ADKQ, AIAQ…KNQM, and EFQL…VSQQ. Residues 3187–3498 form a stalk region; the sequence is EKRSELEEQQ…KTSETFKNQM (312 aa). Lysine 3478 is modified (N6-acetyllysine). AAA stretches follow at residues 3551–3780 and 4003–4219; these read LSNA…EVTR and AHMF…TVDT. Phosphoserine is present on serine 4160. Lysine 4281 is subject to N6-acetyllysine. Threonine 4364 bears the Phosphothreonine mark. The residue at position 4366 (serine 4366) is a Phosphoserine.

The protein belongs to the dynein heavy chain family. As to quaternary structure, homodimer. The cytoplasmic dynein 1 complex consists of two catalytic heavy chains (HCs) and a number of non-catalytic subunits presented by intermediate chains (ICs), light intermediate chains (LICs) and light chains (LCs); the composition seems to vary in respect to the IC, LIC and LC composition. The heavy chain homodimer serves as a scaffold for the probable homodimeric assembly of the respective non-catalytic subunits. The ICs and LICs bind directly to the HC dimer and dynein LCs assemble on the IC dimer. Interacts with DYNC1LI1; DYNC1LI1 and DYNC1LI2 bind mutually exclusive to DYNC1H1. Interacts with DYNC1LI2; DYNC1LI1 and DYNC1LI2 bind mutually exclusive to DYNC1H1. Interacts with DYNC1I2. Interacts with BICD2. Interacts with DNALI1.

It is found in the cytoplasm. The protein localises to the cytoskeleton. Functionally, cytoplasmic dynein 1 acts as a motor for the intracellular retrograde motility of vesicles and organelles along microtubules. Dynein has ATPase activity; the force-producing power stroke is thought to occur on release of ADP. Plays a role in mitotic spindle assembly and metaphase plate congression. The chain is Cytoplasmic dynein 1 heavy chain 1 (Dync1h1) from Mus musculus (Mouse).